A 209-amino-acid polypeptide reads, in one-letter code: Large ribosomal subunit protein bL25 (209 aa).

The interval 188 to 209 (STSMEKEGEGSQEPTAAPSSEN) is disordered. The segment covering 199–209 (QEPTAAPSSEN) has biased composition (polar residues).

It belongs to the bacterial ribosomal protein bL25 family. CTC subfamily. Part of the 50S ribosomal subunit; part of the 5S rRNA/L5/L18/L25 subcomplex. Contacts the 5S rRNA. Binds to the 5S rRNA independently of L5 and L18.

Its function is as follows. This is one of the proteins that binds to the 5S RNA in the ribosome where it forms part of the central protuberance. This chain is Large ribosomal subunit protein bL25, found in Ehrlichia canis (strain Jake).